A 297-amino-acid chain; its full sequence is RNA polymerase sigma-F factor (297 aa).

Residues 1 to 46 (MTVPASTAPQVPPQQDPQVPHPQEPREEPHEEPPSPPAAPRPQSRG) are disordered. Pro residues predominate over residues 10–22 (QVPPQQDPQVPHP). A compositionally biased stretch (basic and acidic residues) spans 23-33 (QEPREEPHEEP). Residues 101–114 (DVVQVGTIGLINAI) carry the Polymerase core binding motif. Positions 264–283 (QSQISAELGVSQMHVSRLLA) form a DNA-binding region, H-T-H motif.

It belongs to the sigma-70 factor family. SigB subfamily.

Its function is as follows. Sigma factors are initiation factors that promote the attachment of RNA polymerase to specific initiation sites and are then released. This sigma factor is required for normal spore maturation. This Kitasatospora aureofaciens (Streptomyces aureofaciens) protein is RNA polymerase sigma-F factor (sigF).